A 313-amino-acid polypeptide reads, in one-letter code: Protein PHOSPHATE-INDUCED 1 (313 aa).

Positions 1–22 are cleaved as a signal peptide; sequence MATSHFILKLFLVISFCNVCFA. A glycan (N-linked (GlcNAc...) asparagine) is linked at Asn-119.

Belongs to the EXORDIUM family.

The protein resides in the secreted. The protein localises to the extracellular space. It is found in the apoplast. In terms of biological role, may be involved in the regulation of cell division. This is Protein PHOSPHATE-INDUCED 1 from Nicotiana tabacum (Common tobacco).